We begin with the raw amino-acid sequence, 298 residues long: Cyclic dof factor 1 (298 aa).

The disordered stretch occupies residues 27–46; it reads EEEEKNQNKTLTDQSEKDKT. A Dof-type zinc finger spans residues 54–108; it reads LPCPRCNSMETKFCYYNNYNVNQPRHFCKACQRYWTSGGTMRSVPIGAGRRKNKN. Zn(2+)-binding residues include Cys-56, Cys-59, Cys-81, and Cys-84. The interval 200-231 is disordered; that stretch reads SSSPTSTLGKHSRDEDETVKQKQRNGSVLVPK. Over residues 210-219 the composition is skewed to basic and acidic residues; that stretch reads HSRDEDETVK.

Interacts with ADO2 (via kelch repeats), ADO3 (via kelch repeats) and GI (via N-terminus). Post-translationally, ubiquitinated. Expressed in the vascular tissues of cotyledons, leaves and hypocotyls and in stomata. Not detected in roots.

The protein localises to the nucleus. Transcription factor that binds specifically to a 5'-AA[AG]G-3' consensus core sequence. A flanking TGT sequence contributes to the specificity of binding. Regulates a photoperiodic flowering response. Transcriptional repressor of 'CONSTANS' expression. The DNA-binding ability is not modulated by 'GIGANTEA' but the stability of CDF1 is controlled by the proteasome-dependent pathway. Ubiquitinated by the SCF(ADO3) E3 ubiquitin ligase complex. Binds to the FT promoter in the morning. In Arabidopsis thaliana (Mouse-ear cress), this protein is Cyclic dof factor 1 (CDF1).